The sequence spans 106 residues: Tripartite terminase subunit 2 (106 aa).

Belongs to the herpesviridae TRM2 protein family. Associates with TRM1 and TRM3 to form the tripartite terminase complex.

It localises to the host nucleus. Functionally, component of the molecular motor that translocates viral genomic DNA in empty capsid during DNA packaging. Forms a tripartite terminase complex together with TRM1 and TRM3 in the host cytoplasm. Once the complex reaches the host nucleus, it interacts with the capsid portal vertex. This portal forms a ring in which genomic DNA is translocated into the capsid. The protein is Tripartite terminase subunit 2 of Human herpesvirus 6A (strain Uganda-1102) (HHV-6 variant A).